The chain runs to 195 residues: UPF0301 protein Bpro_1142 (195 aa).

Belongs to the UPF0301 (AlgH) family.

This chain is UPF0301 protein Bpro_1142, found in Polaromonas sp. (strain JS666 / ATCC BAA-500).